An 830-amino-acid polypeptide reads, in one-letter code: Dimethylglycine oxidase (830 aa).

Residues 14–15 (IV), 35–36 (DQ), 45–48 (STSH), leucine 52, and valine 174 each bind FAD. Histidine 48 bears the Pros-8alpha-FAD histidine mark. Residues histidine 225 and tyrosine 259 contribute to the active site. FAD-binding positions include tyrosine 259 and 360–363 (VWVT). Residue tyrosine 539 coordinates (6S)-5,6,7,8-tetrahydrofolate. The For 5,10-methylenetetrahydrofolate synthesis activity role is filled by aspartate 552. (6S)-5,6,7,8-tetrahydrofolate-binding positions include threonine 554, glycine 566, and 658–660 (ELY).

Belongs to the GcvT family. It depends on FAD as a cofactor.

It carries out the reaction N,N-dimethylglycine + O2 + H2O = sarcosine + formaldehyde + H2O2. The enzyme catalyses N,N-dimethylglycine + (6S)-5,6,7,8-tetrahydrofolate + O2 = sarcosine + (6R)-5,10-methylene-5,6,7,8-tetrahydrofolate + H2O2. In terms of biological role, catalyzes the oxidative demethylation of N,N-dimethylglycine to yield sarcosine, formaldehyde and hydrogen peroxide. The oxidation of dimethylglycine is coupled to the synthesis of 5,10-methylenetetrahydrofolate through an unusual substrate channeling mechanism. This channeling occurs by nonbiased diffusion of the iminium intermediate through a large solvent cavity connecting active site 1 (N-terminus) and active site 2 (C-terminus). The synthesis of 5,10-methylenetetrahydrofolate (at active site 2) prevents the accumulation of formaldehyde, formed by hydrolysis of the iminium intermediate product (at active site 1). Does not oxidize sarcosine. In Arthrobacter globiformis, this protein is Dimethylglycine oxidase (dmg).